The primary structure comprises 91 residues: Large ribosomal subunit protein bL27 (91 aa).

It belongs to the bacterial ribosomal protein bL27 family.

In Chromobacterium violaceum (strain ATCC 12472 / DSM 30191 / JCM 1249 / CCUG 213 / NBRC 12614 / NCIMB 9131 / NCTC 9757 / MK), this protein is Large ribosomal subunit protein bL27.